The sequence spans 68 residues: Tabimmunregulin 1 (68 aa).

A signal peptide spans 1-26 (MLLKSYVFFLLSLLIVGLFTSRDADA). A propeptide spanning residues 27 to 38 (QYEDLVTGYLRK) is cleaved from the precursor.

In terms of tissue distribution, expressed in salivary glands.

The protein resides in the secreted. In terms of biological role, horsefly salivary gland immunosuppressant protein that likely inhibits the host inflammatory response by regulation of anti- and pro-inflammatory cytokines. When tested on mouse splenocytes in the presence of LPS, it increases the secretion of the proinflammatory cytokine interleukin-10 (IL10) and decreases the secretion of the proinflammatory cytokine interferon-gamma (IFNG) in a dose-dependent manner. The sequence is that of Tabimmunregulin 1 from Tabanus yao (Horsefly).